The chain runs to 328 residues: Adenosine receptor A1 (328 aa).

Residues 1–10 lie on the Extracellular side of the membrane; sequence MPPSISAFQA. Residues 11 to 33 traverse the membrane as a helical segment; the sequence is AYIGIEVLIALVSVPGNVLVIWA. Residues 34 to 46 lie on the Cytoplasmic side of the membrane; sequence VKVNQALRDATFC. The chain crosses the membrane as a helical span at residues 47 to 69; it reads FIVSLAVADVAVGALVIPLAILI. Residues 70-80 lie on the Extracellular side of the membrane; it reads NIGPETYFHTC. Cys-80 and Cys-169 are oxidised to a cystine. The chain crosses the membrane as a helical span at residues 81–102; that stretch reads LMVACPVLILTQSSILALLAIA. Residues 103–123 are Cytoplasmic-facing; sequence VDRYLRVKIPLRYKAVVTPRR. The helical transmembrane segment at 124-146 threads the bilayer; the sequence is AAVAIAGCWILSLVVGLTPMFGW. Topologically, residues 147-176 are extracellular; the sequence is NNLREVQRAWAANGSVGEPVIKCEFEKVIS. N-linked (GlcNAc...) asparagine glycosylation is present at Asn-159. Residues 177–201 traverse the membrane as a helical segment; it reads MEYMVYFNFFVWVLPPLLLMVLIYL. The Cytoplasmic portion of the chain corresponds to 202–235; the sequence is EVFYLIRRQLSKKASASSGDPHKYYGKELKIAKS. A helical membrane pass occupies residues 236-259; the sequence is LALILFLFALSWLPLHILNCVTLF. Residues 260–267 lie on the Extracellular side of the membrane; sequence CPSCQKPS. The chain crosses the membrane as a helical span at residues 268 to 292; it reads ILVYTAIFLTHGNSAMNPIVYAFRI. The Cytoplasmic segment spans residues 293 to 328; it reads HKFRVTFLKIWNDHFRCRPAPAGDGDEDLPEEKPND. Residue Cys-309 is the site of S-palmitoyl cysteine attachment.

This sequence belongs to the G-protein coupled receptor 1 family.

It is found in the cell membrane. Its function is as follows. Receptor for adenosine. The activity of this receptor is mediated by G proteins which inhibit adenylyl cyclase. The chain is Adenosine receptor A1 (ADORA1) from Oryctolagus cuniculus (Rabbit).